We begin with the raw amino-acid sequence, 476 residues long: Inosine-5'-monophosphate dehydrogenase (476 aa).

2 consecutive CBS domains span residues 93-151 and 152-211; these read IIRD…VKDI and MTKD…TRDE. NAD(+) contacts are provided by residues Asp-242 and 292 to 294; that span reads GIG. Positions 294 and 296 each coordinate K(+). Ser-297 is a binding site for IMP. Residue Cys-299 participates in K(+) binding. Cys-299 acts as the Thioimidate intermediate in catalysis. IMP-binding positions include 334 to 336, 357 to 358, and 381 to 385; these read DGG, GY, and YRGMG. The active-site Proton acceptor is the Arg-398. Glu-408 provides a ligand contact to IMP. A K(+)-binding site is contributed by Glu-462.

It belongs to the IMPDH/GMPR family. As to quaternary structure, homotetramer. Requires K(+) as cofactor.

It carries out the reaction IMP + NAD(+) + H2O = XMP + NADH + H(+). Its pathway is purine metabolism; XMP biosynthesis via de novo pathway; XMP from IMP: step 1/1. Its activity is regulated as follows. Mycophenolic acid (MPA) is a non-competitive inhibitor that prevents formation of the closed enzyme conformation by binding to the same site as the amobile flap. In contrast, mizoribine monophosphate (MZP) is a competitive inhibitor that induces the closed conformation. MPA is a potent inhibitor of mammalian IMPDHs but a poor inhibitor of the bacterial enzymes. MZP is a more potent inhibitor of bacterial IMPDH. Its function is as follows. Catalyzes the conversion of inosine 5'-phosphate (IMP) to xanthosine 5'-phosphate (XMP), the first committed and rate-limiting step in the de novo synthesis of guanine nucleotides, and therefore plays an important role in the regulation of cell growth. This Korarchaeum cryptofilum (strain OPF8) protein is Inosine-5'-monophosphate dehydrogenase.